Reading from the N-terminus, the 65-residue chain is Large ribosomal subunit protein uL29 (65 aa).

The protein belongs to the universal ribosomal protein uL29 family.

In Paracidovorax citrulli (strain AAC00-1) (Acidovorax citrulli), this protein is Large ribosomal subunit protein uL29.